The chain runs to 109 residues: Ubiquitin-related modifier 1 homolog (109 aa).

A 1-thioglycine modification is found at Gly109. A Glycyl lysine isopeptide (Gly-Lys) (interchain with K-? in acceptor proteins) cross-link involves residue Gly109.

Belongs to the URM1 family. C-terminal thiocarboxylation occurs in 2 steps, it is first acyl-adenylated (-COAMP) via the hesA/moeB/thiF part of the MOCS3 homolog, then thiocarboxylated (-COSH) via the rhodanese domain of the MOCS3 homolog.

Its subcellular location is the cytoplasm. Its pathway is tRNA modification; 5-methoxycarbonylmethyl-2-thiouridine-tRNA biosynthesis. Functionally, acts as a sulfur carrier required for 2-thiolation of mcm(5)S(2)U at tRNA wobble positions of cytosolic tRNA(Lys), tRNA(Glu) and tRNA(Gln). Serves as sulfur donor in tRNA 2-thiolation reaction by being thiocarboxylated (-COSH) at its C-terminus by MOCS3. The sulfur is then transferred to tRNA to form 2-thiolation of mcm(5)S(2)U. Also acts as a ubiquitin-like protein (UBL) that is covalently conjugated via an isopeptide bond to lysine residues of target proteins. The thiocarboxylated form serves as substrate for conjugation and oxidative stress specifically induces the formation of UBL-protein conjugates. This is Ubiquitin-related modifier 1 homolog from Anopheles gambiae (African malaria mosquito).